The following is a 171-amino-acid chain: Co-chaperone protein HscB homolog (171 aa).

The J domain maps to 2 to 69 (NHFELFDLPV…DSRAAYLLSL (68 aa)).

Belongs to the HscB family. In terms of assembly, interacts with HscA and stimulates its ATPase activity.

In terms of biological role, co-chaperone involved in the maturation of iron-sulfur cluster-containing proteins. Seems to help targeting proteins to be folded toward HscA. This is Co-chaperone protein HscB homolog from Acinetobacter baylyi (strain ATCC 33305 / BD413 / ADP1).